Consider the following 865-residue polypeptide: Alanine--tRNA ligase (865 aa).

Zn(2+)-binding residues include histidine 552, histidine 556, cysteine 654, and histidine 658.

Belongs to the class-II aminoacyl-tRNA synthetase family. Requires Zn(2+) as cofactor.

The protein resides in the cytoplasm. It catalyses the reaction tRNA(Ala) + L-alanine + ATP = L-alanyl-tRNA(Ala) + AMP + diphosphate. Functionally, catalyzes the attachment of alanine to tRNA(Ala) in a two-step reaction: alanine is first activated by ATP to form Ala-AMP and then transferred to the acceptor end of tRNA(Ala). Also edits incorrectly charged Ser-tRNA(Ala) and Gly-tRNA(Ala) via its editing domain. This chain is Alanine--tRNA ligase, found in Coxiella burnetii (strain Dugway 5J108-111).